Here is a 485-residue protein sequence, read N- to C-terminus: N-succinylglutamate 5-semialdehyde dehydrogenase (485 aa).

Residue G220 to G225 participates in NAD(+) binding. Catalysis depends on residues E243 and C278.

It belongs to the aldehyde dehydrogenase family. AstD subfamily.

It catalyses the reaction N-succinyl-L-glutamate 5-semialdehyde + NAD(+) + H2O = N-succinyl-L-glutamate + NADH + 2 H(+). It participates in amino-acid degradation; L-arginine degradation via AST pathway; L-glutamate and succinate from L-arginine: step 4/5. In terms of biological role, catalyzes the NAD-dependent reduction of succinylglutamate semialdehyde into succinylglutamate. In Aliivibrio fischeri (strain ATCC 700601 / ES114) (Vibrio fischeri), this protein is N-succinylglutamate 5-semialdehyde dehydrogenase.